The following is a 1025-amino-acid chain: Multidrug resistance protein MdtC (1025 aa).

The next 12 membrane-spanning stretches (helical) occupy residues 15 to 35 (ILIS…LPVA), 333 to 353 (EVEQ…FLFL), 360 to 380 (LIPA…MYLC), 387 to 407 (LSLM…IVVL), 431 to 451 (VGFT…PLLL), 469 to 489 (VAIG…CGWL), 528 to 548 (LTGL…ISIP), 851 to 871 (AQVI…GVLY), 875 to 895 (VHPL…LLAL), 897 to 917 (IFDA…IGIV), 953 to 973 (PIMM…LSGG), and 984 to 1004 (ITIV…TPVV).

This sequence belongs to the resistance-nodulation-cell division (RND) (TC 2.A.6) family. MdtC subfamily. In terms of assembly, part of a tripartite efflux system composed of MdtA, MdtB and MdtC. MdtC forms a heteromultimer with MdtB.

The protein resides in the cell inner membrane. The protein is Multidrug resistance protein MdtC of Klebsiella pneumoniae subsp. pneumoniae (strain ATCC 700721 / MGH 78578).